Consider the following 85-residue polypeptide: Putative transmembrane protein ORF85 (85 aa).

2 helical membrane passes run phenylalanine 12–serine 32 and leucine 44–isoleucine 64.

It localises to the host membrane. The chain is Putative transmembrane protein ORF85 from Acidianus convivator (ABV).